A 253-amino-acid chain; its full sequence is Geranylgeranylglyceryl phosphate synthase (253 aa).

Mg(2+) contacts are provided by D23 and S52. Residues 171 to 177 (YFEAGSG), 202 to 203 (GG), and 224 to 225 (GT) contribute to the sn-glycerol 1-phosphate site.

The protein belongs to the GGGP/HepGP synthase family. Group II subfamily. In terms of assembly, homodimer. Mg(2+) is required as a cofactor.

The protein resides in the cytoplasm. It carries out the reaction sn-glycerol 1-phosphate + (2E,6E,10E)-geranylgeranyl diphosphate = sn-3-O-(geranylgeranyl)glycerol 1-phosphate + diphosphate. Its pathway is membrane lipid metabolism; glycerophospholipid metabolism. Inhibited by high concentrations of magnesium (&gt;10 mM) and by EDTA in vitro. Prenyltransferase that catalyzes the transfer of the geranylgeranyl moiety of geranylgeranyl diphosphate (GGPP) to the C3 hydroxyl of sn-glycerol-1-phosphate (G1P). This reaction is the first ether-bond-formation step in the biosynthesis of archaeal membrane lipids. Cannot use sn-glycerol-3-phosphate (G3P) as substrate. This chain is Geranylgeranylglyceryl phosphate synthase, found in Thermoplasma acidophilum (strain ATCC 25905 / DSM 1728 / JCM 9062 / NBRC 15155 / AMRC-C165).